A 103-amino-acid chain; its full sequence is Endoribonuclease MazF3 (103 aa).

Belongs to the PemK/MazF family. Forms a complex with cognate antitoxin MazE3.

Functionally, toxic component of a type II toxin-antitoxin (TA) system. Acts as an endoribonuclease, cleaving in U-rich regions. Neutralized by cognate antitoxin MazE3. The polypeptide is Endoribonuclease MazF3 (mazF3) (Mycobacterium tuberculosis (strain CDC 1551 / Oshkosh)).